Here is a 777-residue protein sequence, read N- to C-terminus: DNA repair helicase/translocase XPB-R (777 aa).

Positions 212 to 416 (AASDGALRSG…DLFHLVGPKL (205 aa)) constitute a Helicase ATP-binding domain. 225–232 (LPCGSGKT) lines the ATP pocket. A DEVH box motif is present at residues 369 to 372 (DEVH). One can recognise a Helicase C-terminal domain in the interval 484–631 (IVKRHVAESS…GYTCSVTEFN (148 aa)).

The protein belongs to the helicase family. RAD25/XPB subfamily.

It carries out the reaction Couples ATP hydrolysis with the unwinding of duplex DNA by translocating in the 3'-5' direction.. It catalyses the reaction ATP + H2O = ADP + phosphate + H(+). In terms of biological role, ATP-dependent 3'-5' DNA helicase/translocase; binds dsDNA rather than ssDNA, unzipping it in a translocase rather than classical helicase activity. Involved in nucleotide excision repair (NER) of damaged DNA. XPB-R is a paralog of XBP, but is not a component of the TFIIH basal transcription factor and is dispensable for RNA polymerase II transcription. The protein is DNA repair helicase/translocase XPB-R of Trypanosoma brucei brucei (strain 927/4 GUTat10.1).